The primary structure comprises 264 residues: ELL-associated factor 2 (264 aa).

Disordered stretches follow at residues 114–154 (EGSS…PSSP) and 169–264 (MDQL…DSDD). Residues 117-142 (SKVQSRIEQQQQQIRNSSKTPNNIKN) show a composition bias toward polar residues. Residues 173 to 196 (SSSDSSSDSKSSSSSSSSSENSSS) show a composition bias toward low complexity. The span at 228-238 (VPDKDASHNRS) shows a compositional bias: basic and acidic residues. The span at 239–264 (QENSGHMMNTLRSDLQLSESGSDSDD) shows a compositional bias: polar residues.

The protein belongs to the EAF family.

It is found in the nucleus speckle. In terms of biological role, may act as a transcriptional transactivator. This is ELL-associated factor 2 (EAF2) from Gallus gallus (Chicken).